The chain runs to 637 residues: 1-deoxy-D-xylulose-5-phosphate synthase (637 aa).

Thiamine diphosphate contacts are provided by residues His71 and 112-114; that span reads SHA. Asp144 serves as a coordination point for Mg(2+). Thiamine diphosphate is bound by residues 145-146, Asn173, Tyr284, and Glu365; that span reads GA. Residue Asn173 coordinates Mg(2+).

The protein belongs to the transketolase family. DXPS subfamily. In terms of assembly, homodimer. Requires Mg(2+) as cofactor. Thiamine diphosphate is required as a cofactor.

It carries out the reaction D-glyceraldehyde 3-phosphate + pyruvate + H(+) = 1-deoxy-D-xylulose 5-phosphate + CO2. It functions in the pathway metabolic intermediate biosynthesis; 1-deoxy-D-xylulose 5-phosphate biosynthesis; 1-deoxy-D-xylulose 5-phosphate from D-glyceraldehyde 3-phosphate and pyruvate: step 1/1. Catalyzes the acyloin condensation reaction between C atoms 2 and 3 of pyruvate and glyceraldehyde 3-phosphate to yield 1-deoxy-D-xylulose-5-phosphate (DXP). The sequence is that of 1-deoxy-D-xylulose-5-phosphate synthase from Mycolicibacterium gilvum (strain PYR-GCK) (Mycobacterium gilvum (strain PYR-GCK)).